Reading from the N-terminus, the 134-residue chain is Flagellar basal-body rod protein FlgC (134 aa).

It belongs to the flagella basal body rod proteins family. The basal body constitutes a major portion of the flagellar organelle and consists of four rings (L,P,S, and M) mounted on a central rod. The rod consists of about 26 subunits of FlgG in the distal portion, and FlgB, FlgC and FlgF are thought to build up the proximal portion of the rod with about 6 subunits each.

It localises to the bacterial flagellum basal body. This Escherichia coli O157:H7 protein is Flagellar basal-body rod protein FlgC (flgC).